A 416-amino-acid chain; its full sequence is L-threonine dehydratase biosynthetic IlvA (416 aa).

The residue at position 51 (Lys-51) is an N6-(pyridoxal phosphate)lysine. Residues Asn-78, 184–188 (GGGGL), and Ser-309 contribute to the pyridoxal 5'-phosphate site. One can recognise an ACT-like domain in the interval 333–407 (HYFVINFPQR…FDNRYVNLHG (75 aa)).

Belongs to the serine/threonine dehydratase family. In terms of assembly, homotetramer. Pyridoxal 5'-phosphate is required as a cofactor.

It carries out the reaction L-threonine = 2-oxobutanoate + NH4(+). It participates in amino-acid biosynthesis; L-isoleucine biosynthesis; 2-oxobutanoate from L-threonine: step 1/1. Functionally, catalyzes the anaerobic formation of alpha-ketobutyrate and ammonia from threonine in a two-step reaction. The first step involved a dehydration of threonine and a production of enamine intermediates (aminocrotonate), which tautomerizes to its imine form (iminobutyrate). Both intermediates are unstable and short-lived. The second step is the nonenzymatic hydrolysis of the enamine/imine intermediates to form 2-ketobutyrate and free ammonia. In the low water environment of the cell, the second step is accelerated by RidA. This Lactococcus lactis subsp. lactis (strain IL1403) (Streptococcus lactis) protein is L-threonine dehydratase biosynthetic IlvA (ilvA).